A 339-amino-acid chain; its full sequence is Acyl-CoA dehydrogenase FadE28 (339 aa).

FAD-binding residues include Arg-227, Gln-238, His-295, and Gly-299.

The protein belongs to the acyl-CoA dehydrogenase family. As to quaternary structure, heterotetramer composed of FadE28 and FadE29. Requires FAD as cofactor.

It catalyses the reaction 3-oxochol-4-en-22-oyl-CoA + A = 3-oxochola-4,17-dien-22-oyl-CoA + AH2. Its pathway is steroid metabolism; cholesterol degradation. Its function is as follows. Involved in the third cycle of side chain dehydrogenation in the beta-oxidation of cholesterol catabolism. May play an important role for the initial macrophage invasion, possibly in response to the acidification of phagosome. It contributes partly to the virulence by increasing the efficiency of beta-oxidation. Catalyzes the dehydrogenation of 2'-propanoyl-CoA ester side chains of 3-oxo-4-pregnene-20-carboxyl-CoA (3-OPC-CoA) to yield 3-oxo-4,17-pregnadiene-20-carboxyl-CoA (3-OPDC-CoA). Also able to dehydrogenate steroyl-CoA such as 3-oxo-chol-4-en-24-oyl-CoA (3-OCO-CoA), 1beta-(2'-propanoyl-CoA)-3a-alpha-H-7a-beta-methylhexahydro-4-indanone (indanone-CoA ester), hexahydroindanone and pregenenone. In Mycobacterium tuberculosis (strain ATCC 25618 / H37Rv), this protein is Acyl-CoA dehydrogenase FadE28 (fadE28).